The following is a 702-amino-acid chain: Methionine--tRNA ligase (702 aa).

The short motif at Pro23–His33 is the 'HIGH' region element. 4 residues coordinate Zn(2+): Cys154, Cys157, Cys167, and Cys170. Positions Lys341–Ser345 match the 'KMSKS' region motif. Lys344 is an ATP binding site. The interval Leu562 to Pro593 is disordered. Positions Ala569–Asn578 are enriched in polar residues. The 104-residue stretch at Asp599–Arg702 folds into the tRNA-binding domain.

This sequence belongs to the class-I aminoacyl-tRNA synthetase family. MetG type 1 subfamily. As to quaternary structure, homodimer. The cofactor is Zn(2+).

Its subcellular location is the cytoplasm. It carries out the reaction tRNA(Met) + L-methionine + ATP = L-methionyl-tRNA(Met) + AMP + diphosphate. Its function is as follows. Is required not only for elongation of protein synthesis but also for the initiation of all mRNA translation through initiator tRNA(fMet) aminoacylation. The polypeptide is Methionine--tRNA ligase (Xylella fastidiosa (strain 9a5c)).